Here is a 557-residue protein sequence, read N- to C-terminus: Membrane protein insertase YidC (557 aa).

A helical transmembrane segment spans residues 3 to 23 (NLRPVLYLSMLLVLFLIWQAW). Residues 34–60 (APGAQEQVMDRDGVPAPPQDVPDAPVS) form a disordered region. Helical transmembrane passes span 366-386 (VVGN…LVFY), 436-456 (LGGC…YWVL), 480-500 (YFIL…LNPA), and 514-534 (PFVF…YWFV).

The protein belongs to the OXA1/ALB3/YidC family. Type 1 subfamily. In terms of assembly, interacts with the Sec translocase complex via SecD. Specifically interacts with transmembrane segments of nascent integral membrane proteins during membrane integration.

It is found in the cell inner membrane. Required for the insertion and/or proper folding and/or complex formation of integral membrane proteins into the membrane. Involved in integration of membrane proteins that insert both dependently and independently of the Sec translocase complex, as well as at least some lipoproteins. Aids folding of multispanning membrane proteins. The sequence is that of Membrane protein insertase YidC from Thioalkalivibrio sulfidiphilus (strain HL-EbGR7).